Reading from the N-terminus, the 204-residue chain is MTFKGFSKKDFKTMQIPGLEARMNGIQTDIQPKFRAVGEELTTYLSAKLGDEMFLHIARHQRRSVNPPESTWLAICHDKRGYKKHPHFQVGLFDNYLFIWLAFIYENEESAKIANRFLKEKKLLADLPDNFAISPDHTEEKTYPVHDGQLKATLERFRDVKKGEFLVGKIYLPDDSHLSPGKDFIKEAEMVLDELIPLYKASLQ.

This sequence belongs to the UPF0637 family.

The polypeptide is UPF0637 protein Lm4b_01081 (Listeria monocytogenes serotype 4b (strain CLIP80459)).